The primary structure comprises 339 residues: Glyceraldehyde-3-phosphate dehydrogenase (339 aa).

NAD(+) is bound by residues 13–14, Asp-35, and Lys-84; that span reads RI. Residues 156 to 158, Thr-187, 216 to 217, and Arg-239 contribute to the D-glyceraldehyde 3-phosphate site; these read SCT and TG. Residue Cys-157 is the Nucleophile of the active site. NAD(+) is bound at residue Asn-321.

Belongs to the glyceraldehyde-3-phosphate dehydrogenase family. Homotetramer.

Its subcellular location is the cytoplasm. It carries out the reaction D-glyceraldehyde 3-phosphate + phosphate + NAD(+) = (2R)-3-phospho-glyceroyl phosphate + NADH + H(+). It participates in carbohydrate degradation; glycolysis; pyruvate from D-glyceraldehyde 3-phosphate: step 1/5. In Brugia malayi (Filarial nematode worm), this protein is Glyceraldehyde-3-phosphate dehydrogenase (G3PD).